The sequence spans 680 residues: Tumor protein 63 (680 aa).

A transcription activation region spans residues 1–107; sequence MNFETSRCAT…MQDSDLSDPM (107 aa). The span at 123–157 shows a compositional bias: polar residues; the sequence is QIQNGSSSTSPYNTDHAQNSVTAPSPYAQPSSTFD. The tract at residues 123–171 is disordered; that stretch reads QIQNGSSSTSPYNTDHAQNSVTAPSPYAQPSSTFDALSPSPAIPSNTDY. The DNA-binding element occupies 170–362; sequence DYPGPHSFDV…KADEDSIRKQ (193 aa). Cys244, His247, Cys308, and Cys312 together coordinate Zn(2+). Residues 351-360 are compositionally biased toward basic and acidic residues; sequence DRKADEDSIR. Disordered stretches follow at residues 351-393 and 435-472; these read DRKA…IKKR and YRQQ…MNSM. The segment at 352–388 is interaction with HIPK2; the sequence is RKADEDSIRKQQVSDSTKNGDGTKRPFRQNTHGIQMT. Polar residues-rich tracts occupy residues 361–371 and 379–389; these read KQQVSDSTKNG and RQNTHGIQMTS. Residues 394–443 are oligomerization; sequence RSPDDELLYLPVRGRETYEMLLKIKESLELMQYLPQHTIETYRQQQQQQH. The span at 437–450 shows a compositional bias: low complexity; sequence QQQQQQHQHLLQKQ. A compositionally biased stretch (polar residues) spans 451–472; it reads TSIQSPSSYGNSSPPLNKMNSM. The SAM domain occupies 541-607; the sequence is PPYPTDCSIV…WKGILDHRQL (67 aa). The transactivation inhibition stretch occupies residues 610–680; that stretch reads FSSPSHLLRT…KQQRIKEEGE (71 aa). Residue Lys676 forms a Glycyl lysine isopeptide (Lys-Gly) (interchain with G-Cter in SUMO) linkage.

It belongs to the p53 family. In terms of assembly, binds DNA as a homotetramer. Isoform composition of the tetramer may determine transactivation activity. Isoforms Alpha and Gamma interact with HIPK2. Interacts with SSRP1, leading to stimulate coactivator activity. Isoform 1 and isoform 2 interact with WWP1. Interacts with PDS5A. Isoform 5 (via activation domain) interacts with NOC2L. The cofactor is Zn(2+). In terms of processing, may be sumoylated. Post-translationally, ubiquitinated. Polyubiquitination involves WWP1 and leads to proteasomal degradation of this protein. Widely expressed, notably in heart, kidney, placenta, prostate, skeletal muscle, testis and thymus, although the precise isoform varies according to tissue type. Progenitor cell layers of skin, breast, eye and prostate express high levels of DeltaN-type isoforms. Isoform 10 is predominantly expressed in skin squamous cell carcinomas, but not in normal skin tissues.

Its subcellular location is the nucleus. Its function is as follows. Acts as a sequence specific DNA binding transcriptional activator or repressor. The isoforms contain a varying set of transactivation and auto-regulating transactivation inhibiting domains thus showing an isoform specific activity. Isoform 2 activates RIPK4 transcription. May be required in conjunction with TP73/p73 for initiation of p53/TP53 dependent apoptosis in response to genotoxic insults and the presence of activated oncogenes. Involved in Notch signaling by probably inducing JAG1 and JAG2. Plays a role in the regulation of epithelial morphogenesis. The ratio of DeltaN-type and TA*-type isoforms may govern the maintenance of epithelial stem cell compartments and regulate the initiation of epithelial stratification from the undifferentiated embryonal ectoderm. Required for limb formation from the apical ectodermal ridge. Activates transcription of the p21 promoter. The protein is Tumor protein 63 (TP63) of Homo sapiens (Human).